The chain runs to 562 residues: Potassium-transporting ATPase potassium-binding subunit (562 aa).

A run of 12 helical transmembrane segments spans residues phenylalanine 6–phenylalanine 26, alanine 63–alanine 83, glycine 132–isoleucine 152, leucine 175–leucine 195, phenylalanine 253–valine 273, leucine 283–leucine 303, phenylalanine 327–valine 347, alanine 356–valine 376, glycine 379–glycine 399, methionine 416–leucine 436, leucine 483–isoleucine 503, and leucine 526–alanine 546.

This sequence belongs to the KdpA family. As to quaternary structure, the system is composed of three essential subunits: KdpA, KdpB and KdpC.

The protein localises to the cell inner membrane. Functionally, part of the high-affinity ATP-driven potassium transport (or Kdp) system, which catalyzes the hydrolysis of ATP coupled with the electrogenic transport of potassium into the cytoplasm. This subunit binds the periplasmic potassium ions and delivers the ions to the membrane domain of KdpB through an intramembrane tunnel. The sequence is that of Potassium-transporting ATPase potassium-binding subunit from Yersinia pseudotuberculosis serotype O:1b (strain IP 31758).